We begin with the raw amino-acid sequence, 501 residues long: Glucose-6-phosphate isomerase (501 aa).

Residues 78-101 (GIANPTENRAAEHSAERGDGAPES) are disordered. Positions 86 to 97 (RAAEHSAERGDG) are enriched in basic and acidic residues. Glutamate 333 acts as the Proton donor in catalysis. Catalysis depends on residues histidine 364 and lysine 474.

The protein belongs to the GPI family.

Its subcellular location is the cytoplasm. The catalysed reaction is alpha-D-glucose 6-phosphate = beta-D-fructose 6-phosphate. Its pathway is carbohydrate biosynthesis; gluconeogenesis. The protein operates within carbohydrate degradation; glycolysis; D-glyceraldehyde 3-phosphate and glycerone phosphate from D-glucose: step 2/4. Functionally, catalyzes the reversible isomerization of glucose-6-phosphate to fructose-6-phosphate. This chain is Glucose-6-phosphate isomerase, found in Sphingopyxis alaskensis (strain DSM 13593 / LMG 18877 / RB2256) (Sphingomonas alaskensis).